A 293-amino-acid polypeptide reads, in one-letter code: Proline iminopeptidase (293 aa).

Residues 28 to 277 (PLVLLHGGPG…NCGHMSFVEK (250 aa)) form the AB hydrolase-1 domain. Ser-105 (nucleophile) is an active-site residue. Asp-244 is an active-site residue. The Proton donor role is filled by His-271.

This sequence belongs to the peptidase S33 family.

It is found in the cell envelope. The catalysed reaction is Release of N-terminal proline from a peptide.. Functionally, releases the N-terminal proline from various substrates. The polypeptide is Proline iminopeptidase (Lactobacillus crispatus (strain ST1)).